Consider the following 385-residue polypeptide: Glucans biosynthesis protein C (385 aa).

10 helical membrane-spanning segments follow: residues 17–37, 60–80, 91–111, 137–157, 173–193, 212–232, 239–259, 274–294, 311–331, and 338–358; these read AWLM…SHTW, MQVF…RYPL, VGIP…IMLQ, ISHL…VWIF, KFSM…YAVI, FIVM…LAFI, LFTT…VAYL, TESV…FSFG, ASLF…AYIT, and WLGF…LYEI.

Belongs to the acyltransferase 3 family. OpgC subfamily.

It is found in the cell membrane. It participates in glycan metabolism; osmoregulated periplasmic glucan (OPG) biosynthesis. In terms of biological role, necessary for the succinyl substitution of periplasmic glucans. Could catalyze the transfer of succinyl residues from the cytoplasmic side of the membrane to the nascent glucan backbones on the periplasmic side of the membrane. This is Glucans biosynthesis protein C from Escherichia coli O6:K15:H31 (strain 536 / UPEC).